Reading from the N-terminus, the 375-residue chain is Carboxypeptidase O (375 aa).

An N-terminal signal peptide occupies residues 1-20; that stretch reads MKPLLGTFYLLGMLVPGWLG. A Peptidase M14 domain is found at 50–345; sequence RYHPMGEIYQ…EAVLSVLDDV (296 aa). Residues His109 and Glu112 each contribute to the Zn(2+) site. Asn175 is a glycosylation site (N-linked (GlcNAc...) asparagine). Position 237 (His237) interacts with Zn(2+). Asn252 carries an N-linked (GlcNAc...) asparagine glycan. The active-site Proton donor/acceptor is Glu311. Residue Asn315 is glycosylated (N-linked (GlcNAc...) asparagine). Ser354 carries the GPI-anchor amidated serine lipid modification. Positions 355–375 are cleaved as a propeptide — removed in mature form; the sequence is ARKAKSTALVLGLLMSFMSLL.

This sequence belongs to the peptidase M14 family. The cofactor is Zn(2+).

Its subcellular location is the apical cell membrane. Its function is as follows. Carboxypeptidase which preferentially cleaves C-terminal acidic residues from peptides and proteins. Can also cleave C-terminal hydrophobic amino acids, with a preference for small residues over large residues. This chain is Carboxypeptidase O, found in Bos taurus (Bovine).